We begin with the raw amino-acid sequence, 4349 residues long: MEVTSAAAPSTGSSANGVTAAAPFPTIEPERVVEHLAAVCEIALGATRDELEQLGSLLHKARYGETVSRCTRFASDSQNVLYIQKDIANPSAVEAGADPAAPVTYNYTLSTEISSSSTTVSSLVLIKSPQPIDPTRPLTSQIFITNLPGPASLNAGVGEQGTALSPWEVLHSQVHHALVPYFDANTKSQQLANGSRGRADVDAKTGIPVTKKRLNDLELSLLHLQQNVDIPEISLTFHSIVQNVLDDAESRHTRPSLDAIPQIFSQDSTFLNRLQANVNTWIKSIQGITKLTKDPSSNANQEFNTASQEVNFWLSMESALEGIEGQLRSEGVLLTLEILKHAKRFQATVSFTADTGLKEAMDKVQKYNQLMRDFPLDELLSATSLSKAQEAIAQIFGHLNKKLRICPYPIRRALPLVEAISADLDEVLHRLLPGTELVNLDYQQFQTIMQTCDDIFRTWEENVKEFTNVAREVTRRRNEKFIPIKINKKHSELESRIKYVSTFRDNHEQLQRTIINVLGPQATIPGVTETTGSNGIVMEEMGDVDAVEEVKQAWEALHNVDLLDVTDQGKERWVRAENLYNERTTRVENSIIARLRDRLATAKTANEMFRVFSKFNALFVRPKIRGAIQEYQNQLMDHVKQAINGLHERFKQQYGHSETHAMAQLRDLPPVSGAIIWARQIEFQLDGYMRKVEAVLGPDWTMHTEGHKLQEESELFKQKLDTARIYEAWIADVGRRKISISGQLFEIARVRSAGGILELTVNFDPQVITLFKETRNLTWQSYSVPHAVTTVSKDAKRVYPYAVSLMESVRTLSQTLRQISVMGEESVLLFGYRNDVYKLISEGVPLRWESFINSHELFYSDNRQTRPLLPGGTDFGLAKNTESKHGMFIRGFAAAVSVLQQKAVSLNFIHATVEQALKELNTCPYEEAAFHSRLDTIQAAVDQLNLEQYVNLDFWVRGLNSKVQSILLTRLQSAVHAWIEAFEDDTPDDEMRRKVNNNNEEAKPDGPTMKRLVLELAMRNQVIYLDLLLEFARASWFLHLHEWLGIVCNLRKIKATRYQMSLTTTANDEPRFTDLPSECAGLLQRVYVSVEKKLHEVSAYVDKWLQFQSLWDLQSEQVYDALGEQLPRWLQLLQEIRKTRSTFDTQEVSRAFGHLTIDYDQVQTKVNAKYDQWQHEILMKFASRLGNRMREINAEIEKARKHLESQSSDASSTAQAVQFITVVQSCKRNVKTWAPEIDMFRQGQSTLVRQRYQFPNDWLHIEQIDSQWEALKEILEKKSRIVQDQTDALQAKIVAEDKLINERIAEIAAQWNEEKPVSGTIQPDVASATLSSFESRISKLQDDAQMVAKAKEALDIPASPDTSLEATLEEVRDFQSVWSNLSTIWASLNETRDVLWTAVQPRKIRSKVDDLIKSTKEMPSRMRQYAAFEHVQGILRGFLKVNSILSDLKSDAIRERHWHKIYKQIKPQKRFSPSSMTLGDVWDLNLVATEVIVKDIIAQAQGEMVLEEFLKQVRETWQNYALEMVNYQNKIGLIRGWDDLFAKCSENLNSLQAMKHSPYYKEFEEEAVAWEDKLNRVHVLFDVWIDVQRQWVYLEGVFTGNADIKHLLPIESGRFQNINSEFLAVMKKANKSPYVLEVLNIPNVQKSLERLAEMLNKIQKALGEYLEKERVSFPRFYFVGDEDLLEMIGNSNDTLRIAKHFKKMFAGLSGLVMDDETVISGFTSKEGEVVRLKKEISLAKTPKINDWLALLEGGMKSTLAELLAEAVDQYTPIFESETIDREALNGFMDAYPSQIVVLATQVVWTTAVHKSLTTGGETLKAIFDREVRVLRVLADTVLGELEVILRKKCEQQITECVHQRDTIEKLINAKANSTNHYLWQLQMRYVYEPQGEYLDRLYIKMANAKLNYGFEYLGVPERLVRTPLTDRCFLTLTQALCQRLGGSPYGPAGTGKTESVKALGVQLGRFTLVFCCDDTFDFQAMGRIFLGICQVGAWGCFDEFNRLEERILSAVSQEIQNIQLGLKQGVEDDQSQIELVGRHLHVNENTGIFITMNPGYAGRSNLPDNLKKLFRSVAMSKPDKELIAEVMLYSQGFNQAKQLSKQTVPFFDQCSGRLSKQAHYDFGLRALKSVLVSSGGLKRARLGEGSLGAEEVVEPEIIVQSIRETIAPKLIKSDVDIMATIETDCFPGVQYVPANLEALENAIRELAAERHLVVNELWMTKVLQLYQIQKIHHGVMMVGNSGSGKSAAWRLLLDALQKVEGVEGVSHVIDSKVMSKEALYGNLDSTTREWTDGLFTSILRKIVDNLRGEDSKRHWIVFDGDVDPEWVENLNSVLDDNKLLTLPNGERLNLPANVRIMFEVETLKYATLATVSRCGMVWFSEDTVSPTMMVQNYLSTLRSVPFEDLDEDSVATGHTPAKTLAVQSEFASLLHVYLTDENFILPALQRAEGYNHIMEFTTARVLTTLFSLLNKAVRDAIEYNGQHSDFPLESEQIESFISKKLLLALVWALTGDCPLTDRKSFGDDICALANFGSPPLDGNSSLIDFDVTLPKAEWAPWQNQVPSVEVNTHSITQTDVVIPTLDTVRHENVLYSWLAEHKPLLLCGPPGSGKTMTLFSALRKLPNMEVVGLNFSSATTPDLLIKTFEQYCEYKKTLNGVMLSPTQIGRWLVIFCDEINLPAPDKYGTQRAISFLRQLVEHNGFWRTSDKSWVTLDRIQFVGACNPPTDAGRTPMGARFLRHAPLIMVDYPGELSLNQIYGTFNSAVLKIIPSLRGYAEPLTHAMVRFYLESQQRFTPKIQPHYVYSPRELTRWVRGVYEAIRPLEALTIEGLIRIWAHEALRLFQDRLVAEEERQWTDESVRRIALEFFPNIDEEKALGGPILFSNWLSKNYVPVDREQLRDFVKARLKTFCEEEVDVPLILFNDVLEHVLRIDRVFRQPQGHLILIGVSGSGKTTLSRFVAWMNGLKVFQIKVHGKYSAEDFDDDLRDVLRRCGCKGEKICFIMDESNVLDSGFLERMNTLLANAEVPGLFEGDEYAALMTACKEGAQRQNLRLDSPEEMYKWFTQQIVKNLHVVFTMNPPEDGLSSKAATSPALFNRCVLNWFGDWSDQALFQVGHELTQSIDLDRSNFECPDTIPVAYRGLQLPPSHRERVVNSMVHIHYSLQRYNEKLLKQQGKVTFLRPRHFLDFVTQYIKLYNEKREDLEEQQRHLNVGLEKLRDTVDKVRDLRVSLAEKKKQLEQKDAEANEKLQRMVADQREAEQRKNTSLEIQANLEKQEAEVASRKKVVLEDLAKAEPAVEEAKASVSNIKRQHLTEVRSMGNPPQGVRLAMDAVCTLLGHRINDWKAVQGILRKDDFIASILMFDNAKQMTKGLRNKMRNDFLSNPEFTFEKVNRASKACGPLVQWVAAQVNYFDILDRVGPLKIEVEQLEDQALETKAQAKSVQNNIADLEASINTYKTEYAALISETQAIKAEMSRVQFKVDRSVRLLDSLSSERVRWEAGSKSFEIQISTLVGDVLVAAAFLAYSGLYDQTFRKSMMDDWFHQLHLSGIQYKSPNPVTEYLSTADERLGWQENALPVDDLCTENAIILKRFNRYPLIIDPSGRVTEFLQKECKDRRLTVTSFLDDTFTKQLESSLRFGNPILIQDAEHLDPILNHVLNKECQRTGGRVLIQLGKQEIDFSPAFKLYLSTRDPSATFAPDICSRTTFVNFTVTQSSLQTQSLNDVLKSERPDVDERRSNLIKLQGEFKIHLRQLEKRLLQALNESRGNILDDDNVIETLETLKTEAAEISAKMSNTEGVMAEVEEITQQYSIIARSCSAVFAVLEQLHYLNHFYQFSLQYFLDIFQSVLHGNKNLANETDHNARRDVIVHDLFVNTFKRTALGLLQKDRITLGMLLAQASPYKMDKSVIDMILDNRVEGKDLSSHPDDRENAFAQAKKLSAIKDKIDAISTEDWDKFFTEELAENAVPHIWDEKTEAIDQALLSLLLVKLFRMDRFVPAAERFVAQVFGSDIFDIVEDLKQTVTQVSATLPISLVSSPGFDASYKVDNLVERMRVKCTNIAMGSNEGLASADKAISNAAQTGSWVLVKNVHLAPTWLQSLEKRMESLNPHSDFRLFLSMESSPKIPVNLLRASRVLMYEQPAGVRANMKDSMSSLSTRATKSPVERTRLYLLLSFLHAVVQERLRYAPNLGWKGFWEFNDSDYECSAYIVDTWIDGVAGNRTNLAPQNIPWEMLRYLVTETYGGKIDDEGDFKLLSQLVTSFLTPAAYEVDHKLVDGPEGGLVVPSGTSFQDFNAWIHRLPEREPPTYLGLPANAEKLLLGGLGRSLIGNLRKVTELLDEGEQLVTEV.

The segment at 1 to 1907 (MEVTSAAAPS…YIKMANAKLN (1907 aa)) is stem. Coiled-coil stretches lie at residues 459–480 (WEEN…RNEK), 1178–1215 (LMKF…STAQ), 1266–1293 (SQWE…QAKI), 1334–1354 (ESRI…KEAL), 1560–1577 (YKEF…LNRV), and 1640–1670 (NIPN…EKER). AAA regions lie at residues 1908 to 2133 (YGFE…VLVS), 2201 to 2459 (NAIR…FTTA), 2565 to 2814 (EVNT…WVRG), and 2908 to 3177 (TFCE…QGKV). Residue 1946–1953 (GPAGTGKT) participates in ATP binding. Residues 2194 to 2217 (ANLEALENAIRELAAERHLVVNEL) are a coiled coil. ATP-binding positions include 2239–2246 (GNSGSGKS), 2604–2611 (GPPGSGKT), and 2946–2953 (GVSGSGKT). Coiled-coil stretches lie at residues 3186–3294 (LDFV…LAKA), 3420–3477 (GPLK…EMSR), and 3774–3807 (DNVI…VEEI). The interval 3186–3477 (LDFVTQYIKL…TQAIKAEMSR (292 aa)) is stalk. 2 AAA regions span residues 3563-3792 (LSTA…EISA) and 4001-4213 (AERF…IVDT).

Belongs to the dynein heavy chain family. As to quaternary structure, consists of at least two heavy chains and a number of intermediate and light chains.

It is found in the cytoplasm. The protein localises to the cytoskeleton. Functionally, cytoplasmic dynein acts as a motor for the intracellular retrograde motility of vesicles and organelles along microtubules. Dynein has ATPase activity; the force-producing power stroke is thought to occur on release of ADP. The chain is Dynein heavy chain, cytoplasmic (DHC1) from Fusarium vanettenii (Neocosmospora pisi).